The primary structure comprises 376 residues: Phytanoyl-CoA hydroxylase-interacting protein-like (376 aa).

Phosphoserine occurs at positions 12 and 15. Asparagine 23 is a glycosylation site (N-linked (GlcNAc...) asparagine). Serine 25 carries the phosphoserine modification. The N-linked (GlcNAc...) asparagine glycan is linked to asparagine 37. The 110-residue stretch at 52-161 folds into the Fibronectin type-III domain; it reads VPHNIKISNI…EIIEFCTADY (110 aa).

This sequence belongs to the PHYHIP family.

In terms of biological role, may play a role in the development of the central system. This chain is Phytanoyl-CoA hydroxylase-interacting protein-like (PHYHIPL), found in Homo sapiens (Human).